A 505-amino-acid chain; its full sequence is Midnolin (505 aa).

Residues 32–106 (MSLAIHSTTG…LTLVPTVEAG (75 aa)) form the Ubiquitin-like domain. Disordered regions lie at residues 155–176 (PWHRQGPQSPERGGERPQVSDF), 228–305 (SIAT…SRKP), and 440–485 (RLRR…GLDF). Positions 238 to 262 (RPVSSAARVPPVSSSPSSPVSPSPV) are enriched in low complexity. Positions 263–282 (TAGTFQSHAASTTCPEQTDC) are enriched in polar residues. Low complexity predominate over residues 283 to 300 (SPPASSNTTSTPGSSPTP).

In terms of assembly, interacts with GCK; the interaction occurs preferentially at low glucose levels. Interacts with the proteasome.

It is found in the nucleus. The protein localises to the cytoplasm. It localises to the cytosol. The protein resides in the nucleolus. Facilitates the ubiquitin-independent proteasomal degradation of stimulus-induced transcription factors such as FOSB, EGR1, NR4A1, and IRF4 to the proteasome for degradation. Promotes also the degradation of other substrates such as CBX4. Plays a role in inhibiting the activity of glucokinase GCK and both glucose-induced and basal insulin secretion. The protein is Midnolin of Rattus norvegicus (Rat).